Consider the following 422-residue polypeptide: Trigger factor (422 aa).

The PPIase FKBP-type domain occupies 158-242 (GDFAVVSLES…VKGLRKKELP (85 aa)).

It belongs to the FKBP-type PPIase family. Tig subfamily.

Its subcellular location is the cytoplasm. It catalyses the reaction [protein]-peptidylproline (omega=180) = [protein]-peptidylproline (omega=0). Involved in protein export. Acts as a chaperone by maintaining the newly synthesized protein in an open conformation. Functions as a peptidyl-prolyl cis-trans isomerase. In Solibacter usitatus (strain Ellin6076), this protein is Trigger factor.